The primary structure comprises 293 residues: Bifunctional protein FolD (293 aa).

NADP(+) contacts are provided by residues 165–167 (GRS), S190, and I231.

This sequence belongs to the tetrahydrofolate dehydrogenase/cyclohydrolase family. Homodimer.

The catalysed reaction is (6R)-5,10-methylene-5,6,7,8-tetrahydrofolate + NADP(+) = (6R)-5,10-methenyltetrahydrofolate + NADPH. The enzyme catalyses (6R)-5,10-methenyltetrahydrofolate + H2O = (6R)-10-formyltetrahydrofolate + H(+). Its pathway is one-carbon metabolism; tetrahydrofolate interconversion. Its function is as follows. Catalyzes the oxidation of 5,10-methylenetetrahydrofolate to 5,10-methenyltetrahydrofolate and then the hydrolysis of 5,10-methenyltetrahydrofolate to 10-formyltetrahydrofolate. This chain is Bifunctional protein FolD, found in Synechococcus sp. (strain CC9902).